Reading from the N-terminus, the 210-residue chain is T-cell surface glycoprotein CD8 beta chain (210 aa).

The first 21 residues, 1 to 21, serve as a signal peptide directing secretion; that stretch reads MQPGLWLLLATQLAALRGSSV. Positions 22–132 constitute an Ig-like V-type domain; the sequence is LQQAPGSVMV…ELTFGKGTRL (111 aa). At 22 to 170 the chain is on the extracellular side; it reads LQQAPGSVMV…VTQKGPSCGL (149 aa). Residues cysteine 41 and cysteine 116 are joined by a disulfide bond. Residue asparagine 102 is glycosylated (N-linked (GlcNAc...) asparagine). The interval 139 to 161 is disordered; it reads PTNSQPTKKPTPRKKMCRPPSPV. Residues 171–191 traverse the membrane as a helical segment; that stretch reads LTLGLLVAGVLVLLVSLGVAI. Topologically, residues 192–210 are cytoplasmic; sequence HLYRLKRRARLRLLKQFYK.

In terms of assembly, forms disulfide-linked heterodimers with CD8A at the cell surface. Interacts with CD3D; this interaction couples TCR-CD3 with CD8. Interacts with LCK. Phosphorylated as a consequence of T-cell activation. In terms of processing, palmitoylated at the cytoplasmic tail and thereby targets the heterodimer CD8A/CD8B to lipid rafts unlike CD8A homodimers.

The protein localises to the cell membrane. Its function is as follows. Integral membrane glycoprotein that plays an essential role in the immune response and serves multiple functions in responses against both external and internal offenses. In T-cells, functions primarily as a coreceptor for MHC class I molecule:peptide complex. The antigens presented by class I peptides are derived from cytosolic proteins while class II derived from extracellular proteins. Interacts simultaneously with the T-cell receptor (TCR) and the MHC class I proteins presented by antigen presenting cells (APCs). In turn, recruits the Src kinase LCK to the vicinity of the TCR-CD3 complex. A palmitoylation site in the cytoplasmic tail of CD8B chain contributes to partitioning of CD8 into the plasma membrane lipid rafts where signaling proteins are enriched. Once LCK recruited, it initiates different intracellular signaling pathways by phosphorylating various substrates ultimately leading to lymphokine production, motility, adhesion and activation of cytotoxic T-lymphocytes (CTLs). Additionally, plays a critical role in thymic selection of CD8+ T-cells. The chain is T-cell surface glycoprotein CD8 beta chain (CD8B) from Felis catus (Cat).